The primary structure comprises 76 residues: Small ribosomal subunit protein uS17 (76 aa).

The protein belongs to the universal ribosomal protein uS17 family. In terms of assembly, part of the 30S ribosomal subunit.

In terms of biological role, one of the primary rRNA binding proteins, it binds specifically to the 5'-end of 16S ribosomal RNA. The protein is Small ribosomal subunit protein uS17 of Dinoroseobacter shibae (strain DSM 16493 / NCIMB 14021 / DFL 12).